Consider the following 158-residue polypeptide: Large ribosomal subunit protein bL35m (158 aa).

This sequence belongs to the bacterial ribosomal protein bL35 family.

The protein resides in the mitochondrion. This is Large ribosomal subunit protein bL35m (mrpl-35) from Caenorhabditis elegans.